The following is a 117-amino-acid chain: MTMRTSSLLLAAVAVVAIVAGATAATVGSWEPVDINDPHVQELGRWAVAEEDRGVAAGGLTFERVTDGEKQVVAGVNYRLTLEASSSGAKDGRYEAVVYEQDPRSNARKLVSFEPIH.

The first 24 residues, 1–24 (MTMRTSSLLLAAVAVVAIVAGATA), serve as a signal peptide directing secretion. One can recognise a Cystatin domain in the interval 28–84 (GSWEPVDINDPHVQELGRWAVAEEDRGVAAGGLTFERVTDGEKQVVAGVNYRLTLEA). Positions 71 to 75 (QVVAG) match the Secondary area of contact motif.

The protein belongs to the cystatin family. Phytocystatin subfamily.

The protein localises to the secreted. Specific inhibitor of cysteine proteinases. Probably involved in the regulation of endogenous processes and in defense against pests and pathogens. The polypeptide is Putative cysteine proteinase inhibitor 7 (Oryza sativa subsp. japonica (Rice)).